The sequence spans 762 residues: Protein PHTF1 (762 aa).

In terms of domain architecture, PHTF spans 6-150 (RDAISWYQKK…VHCQIVSTQI (145 aa)). Transmembrane regions (helical) follow at residues 77 to 97 (GLVRVVFFPLFSSWWIQVTSL), 99 to 119 (IFVWLLLLYLMQVTAIVLYLM), and 121 to 141 (PIVSVSEVLGPLCLMLLMGTV). Residues 152–184 (RPSGNNGNRRRRKLRKTVNGDGTRDNGNNSPDK) form a disordered region. 2 N-linked (GlcNAc...) asparagine glycosylation sites follow: N179 and N224. 5 positions are modified to phosphoserine: S272, S276, S277, S334, and S336. The segment at 345 to 415 (AAFSQGSRSG…NTLHSGTKRD (71 aa)) is disordered. Over residues 348–364 (SQGSRSGMSGGSRSLNL) the composition is skewed to low complexity. The N-linked (GlcNAc...) asparagine glycan is linked to N363. Residues 365–376 (SRRDSESTRHDS) are compositionally biased toward basic and acidic residues. N431 carries an N-linked (GlcNAc...) asparagine glycan. Transmembrane regions (helical) follow at residues 473 to 493 (GVGYQMLGNAVTIGLALFPFL), 515 to 535 (TLFCGAPPVTPVVILSIINFF), 611 to 631 (VVVSSVFLLTLSIAFICCAQV), and 645 to 665 (WEFLIWETALLLFLLRLASLG). N674 and N733 each carry an N-linked (GlcNAc...) asparagine glycan. Residues 737–757 (VVILSAVSGVISDLLGFNIRL) form a helical membrane-spanning segment.

In terms of assembly, interacts with FEM1B. As to expression, highly expressed in testis.

The protein localises to the endoplasmic reticulum membrane. The protein resides in the golgi apparatus. It is found in the cis-Golgi network membrane. The polypeptide is Protein PHTF1 (Rattus norvegicus (Rat)).